A 485-amino-acid chain; its full sequence is MGQFISFMQEIPTFLQEALNIALVAVSLIAIIKGVVNLYKSGLFQFFVFLALAGRSCTEEAFKIGLHTEFQTVSFSMVGLFSNNPHDLPLLCTLNKSHLYIKGGNASFKISFDDIAVLLPEYDVIIQHPADMSWCSKSDDQIWLSQWFMNAVGHDWYLDPPFLCRNRTKTEGFIFQVNTSKTGINENYAKKFKTGMHHLYREYPDSCLDGKLCLMKAQPTSWPLQCPLDHVNTLHFLTRGKNIQLPRRSLKAFFSWSLTDSSGKDTPGGYCLEEWMLVAAKMKCFGNTAVAKCNLNHDSEFCDMLRLFDYNKNAIKTLNDETKKQVNLMGQTINALISDNLLMKNKIRELMSVPYCNYTKFWYVNHTLSGQHSLPRCWLIKNNSYLNISDFRNDWILESDFLISEMLSKEYSDRQGKTPLTLVDICFWSTVFFTASLFLHLVGIPTHRHIRGEACPLPHRLNSLGGCRCGKYPNLKKPTVWRRGH.

Gly-2 carries N-myristoyl glycine; by host lipidation. Residues 2-17 (GQFISFMQEIPTFLQE) lie on the Extracellular side of the membrane. Residues 18-33 (ALNIALVAVSLIAIIK) traverse the membrane as a helical segment. Over 34–58 (GVVNLYKSGLFQFFVFLALAGRSCT) the chain is Cytoplasmic. Residue Cys-57 participates in Zn(2+) binding. The Extracellular portion of the chain corresponds to 59-424 (EEAFKIGLHT…QGKTPLTLVD (366 aa)). 6 cysteine pairs are disulfide-bonded: Cys-92-Cys-226, Cys-135-Cys-164, Cys-207-Cys-213, Cys-271-Cys-284, Cys-293-Cys-302, and Cys-356-Cys-377. Asn-95 and Asn-105 each carry an N-linked (GlcNAc...) asparagine; by host glycan. 2 N-linked (GlcNAc...) asparagine; by host glycosylation sites follow: Asn-166 and Asn-178. A fusion region spans residues 250–286 (LKAFFSWSLTDSSGKDTPGGYCLEEWMLVAAKMKCFG). An HR1 region spans residues 287-355 (NTAVAKCNLN…KIRELMSVPY (69 aa)). Residues Asn-357, Asn-365, Asn-382, and Asn-387 are each glycosylated (N-linked (GlcNAc...) asparagine; by host). The interval 360 to 423 (KFWYVNHTLS…RQGKTPLTLV (64 aa)) is HR2. Residues 425–445 (ICFWSTVFFTASLFLHLVGIP) form a helical membrane-spanning segment. The Cytoplasmic portion of the chain corresponds to 446–485 (THRHIRGEACPLPHRLNSLGGCRCGKYPNLKKPTVWRRGH). Zn(2+) contacts are provided by His-447, His-449, Cys-455, His-459, Cys-467, Cys-469, and His-485.

Belongs to the arenaviridae GPC protein family. In terms of assembly, interacts with glycoprotein G2. Part of the GP complex (GP-C) together with glycoprotein G1 and glycoprotein G2. The GP-complex interacts with protein Z, which interacts with ribonucleocapsid; these interactions may induce virion budding. Homotrimer; disulfide-linked. In pre-fusion state, G1 homotrimers bind G2 homotrimers via ionic interactions. Part of the GP complex (GP-C) together with glycoprotein G2 and the stable signal peptide. Interacts with host TFRC. The GP-complex interacts with protein Z, which interacts with ribonucleocapsid; these interactions may induce virion budding. As to quaternary structure, homotrimer. Interacts with the stable signal peptide. In pre-fusion state, G2 homotrimers bind G1 homotrimers via ionic interactions. Part of the GP complex (GP-C) together with glycoprotein G1 and the stable signal peptide. Acidification in the endosome triggers rearrangements, which ultimately leads to a 6 helix bundle formed by the two heptad repeat domains (HR1 and HR2) in post-fusion state. The GP-complex interacts with protein Z, which interacts with ribonucleocapsid; these interactions may induce virion budding. Post-translationally, specific enzymatic cleavages in vivo yield mature proteins. GP-C polyprotein is cleaved in the endoplasmic reticulum by the host protease MBTPS1. Only cleaved glycoprotein is incorporated into virions. In terms of processing, the SSP remains stably associated with the GP complex following cleavage by signal peptidase and plays crucial roles in the trafficking of GP through the secretory pathway. Myristoylation is necessary for GP2-mediated fusion activity.

It localises to the virion membrane. Its subcellular location is the host endoplasmic reticulum membrane. The protein resides in the host Golgi apparatus membrane. The protein localises to the host cell membrane. In terms of biological role, functions as a cleaved signal peptide that is retained as the third component of the GP complex (GP-C). Helps to stabilize the spike complex in its native conformation. The SSP is required for efficient glycoprotein expression, post-translational maturation cleavage of G1 and G2, glycoprotein transport to the cell surface plasma membrane, formation of infectious virus particles, and acid pH-dependent glycoprotein-mediated cell fusion. Forms the virion spikes together with glycoprotein G2. The glycoprotein spike trimers are connected to the underlying matrix. Mediates virus attachment to host TFRC. This attachment induces virion internalization predominantly through clathrin-mediated endocytosis. Its function is as follows. Forms the virion spikes together with glycoprotein G1. The glycoprotein spike trimers are connected to the underlying matrix. Class I viral fusion protein that directs fusion of viral and host endosomal membranes, leading to delivery of the nucleocapsid into the cytoplasm. Membrane fusion is mediated by irreversible conformational changes induced by acidification. This chain is Pre-glycoprotein polyprotein GP complex, found in Junin mammarenavirus (JUNV).